The sequence spans 62 residues: Large ribosomal subunit protein bL28 (62 aa).

It belongs to the bacterial ribosomal protein bL28 family.

The sequence is that of Large ribosomal subunit protein bL28 from Wolinella succinogenes (strain ATCC 29543 / DSM 1740 / CCUG 13145 / JCM 31913 / LMG 7466 / NCTC 11488 / FDC 602W) (Vibrio succinogenes).